The chain runs to 232 residues: 5'-methylthioadenosine/S-adenosylhomocysteine nucleosidase (232 aa).

The active-site Proton acceptor is the glutamate 12. Substrate contacts are provided by residues glycine 78, isoleucine 152, and 173–174; that span reads ME. The active-site Proton donor is the aspartate 197.

It belongs to the PNP/UDP phosphorylase family. MtnN subfamily. In terms of assembly, homodimer.

The enzyme catalyses S-adenosyl-L-homocysteine + H2O = S-(5-deoxy-D-ribos-5-yl)-L-homocysteine + adenine. The catalysed reaction is S-methyl-5'-thioadenosine + H2O = 5-(methylsulfanyl)-D-ribose + adenine. It carries out the reaction 5'-deoxyadenosine + H2O = 5-deoxy-D-ribose + adenine. Its pathway is amino-acid biosynthesis; L-methionine biosynthesis via salvage pathway; S-methyl-5-thio-alpha-D-ribose 1-phosphate from S-methyl-5'-thioadenosine (hydrolase route): step 1/2. Functionally, catalyzes the irreversible cleavage of the glycosidic bond in both 5'-methylthioadenosine (MTA) and S-adenosylhomocysteine (SAH/AdoHcy) to adenine and the corresponding thioribose, 5'-methylthioribose and S-ribosylhomocysteine, respectively. Also cleaves 5'-deoxyadenosine, a toxic by-product of radical S-adenosylmethionine (SAM) enzymes, into 5-deoxyribose and adenine. Thus, is required for in vivo function of the radical SAM enzymes biotin synthase and lipoic acid synthase, that are inhibited by 5'-deoxyadenosine accumulation. The polypeptide is 5'-methylthioadenosine/S-adenosylhomocysteine nucleosidase (Shigella boydii serotype 4 (strain Sb227)).